The following is a 56-amino-acid chain: Ferredoxin (56 aa).

2 consecutive 4Fe-4S ferredoxin-type domains span residues 2–28 (AYKI…SQGD) and 29–56 (SIFV…PVQE). Residues C9, C12, C15, C19, C38, C41, C44, and C48 each coordinate [4Fe-4S] cluster.

It depends on [4Fe-4S] cluster as a cofactor.

Ferredoxins are iron-sulfur proteins that transfer electrons in a wide variety of metabolic reactions. This is Ferredoxin from Clostridium pasteurianum.